Here is a 436-residue protein sequence, read N- to C-terminus: Histidinol dehydrogenase (436 aa).

NAD(+) is bound by residues Y135, Q197, and N220. 3 residues coordinate substrate: T243, Q265, and H268. Positions 265 and 268 each coordinate Zn(2+). Catalysis depends on proton acceptor residues E334 and H335. 4 residues coordinate substrate: H335, D368, E422, and H427. D368 provides a ligand contact to Zn(2+). H427 contributes to the Zn(2+) binding site.

This sequence belongs to the histidinol dehydrogenase family. The cofactor is Zn(2+).

It carries out the reaction L-histidinol + 2 NAD(+) + H2O = L-histidine + 2 NADH + 3 H(+). It participates in amino-acid biosynthesis; L-histidine biosynthesis; L-histidine from 5-phospho-alpha-D-ribose 1-diphosphate: step 9/9. Catalyzes the sequential NAD-dependent oxidations of L-histidinol to L-histidinaldehyde and then to L-histidine. The sequence is that of Histidinol dehydrogenase from Deinococcus radiodurans (strain ATCC 13939 / DSM 20539 / JCM 16871 / CCUG 27074 / LMG 4051 / NBRC 15346 / NCIMB 9279 / VKM B-1422 / R1).